The primary structure comprises 190 residues: Large ribosomal subunit protein bL9 (190 aa).

Belongs to the bacterial ribosomal protein bL9 family.

In terms of biological role, binds to the 23S rRNA. This chain is Large ribosomal subunit protein bL9, found in Methylorubrum extorquens (strain CM4 / NCIMB 13688) (Methylobacterium extorquens).